The primary structure comprises 159 residues: uncharacterized protein (159 aa).

2 helical membrane-spanning segments follow: residues 59–79 (IGALAAMLAVLSFALGCALVY) and 91–113 (VFSVLSGLLYGGGAVLWGLRRVC).

It is found in the cell membrane. This is an uncharacterized protein from Treponema pallidum (strain Nichols).